Reading from the N-terminus, the 200-residue chain is NADH-quinone oxidoreductase subunit C (200 aa).

It belongs to the complex I 30 kDa subunit family. In terms of assembly, NDH-1 is composed of 14 different subunits. Subunits NuoB, C, D, E, F, and G constitute the peripheral sector of the complex.

The protein localises to the cell inner membrane. It carries out the reaction a quinone + NADH + 5 H(+)(in) = a quinol + NAD(+) + 4 H(+)(out). In terms of biological role, NDH-1 shuttles electrons from NADH, via FMN and iron-sulfur (Fe-S) centers, to quinones in the respiratory chain. The immediate electron acceptor for the enzyme in this species is believed to be ubiquinone. Couples the redox reaction to proton translocation (for every two electrons transferred, four hydrogen ions are translocated across the cytoplasmic membrane), and thus conserves the redox energy in a proton gradient. In Cereibacter sphaeroides (strain ATCC 17029 / ATH 2.4.9) (Rhodobacter sphaeroides), this protein is NADH-quinone oxidoreductase subunit C.